Here is a 458-residue protein sequence, read N- to C-terminus: Na(+)/H(+) antiporter NhaA (458 aa).

12 consecutive transmembrane segments (helical) span residues 27–47 (FLHV…AALI), 78–98 (LHFW…GMEI), 114–134 (ILPI…YLSF), 143–163 (GWAV…ALLG), 172–192 (VILL…IAFF), 201–221 (GLAI…IGLA), 222–242 (SAWL…ITGV), 249–269 (VILG…PLTI), 316–336 (PWVA…VSFA), 346–366 (FLVV…GIIT), 388–408 (ILLI…VSML), and 421–441 (IGVL…GLIY).

It belongs to the NhaA Na(+)/H(+) (TC 2.A.33) antiporter family.

Its subcellular location is the cell inner membrane. It carries out the reaction Na(+)(in) + 2 H(+)(out) = Na(+)(out) + 2 H(+)(in). Na(+)/H(+) antiporter that extrudes sodium in exchange for external protons. The chain is Na(+)/H(+) antiporter NhaA from Bartonella quintana (strain Toulouse) (Rochalimaea quintana).